Reading from the N-terminus, the 122-residue chain is Large ribosomal subunit protein bL12 (122 aa).

It belongs to the bacterial ribosomal protein bL12 family. Homodimer. Part of the ribosomal stalk of the 50S ribosomal subunit. Forms a multimeric L10(L12)X complex, where L10 forms an elongated spine to which 2 to 4 L12 dimers bind in a sequential fashion. Binds GTP-bound translation factors.

Its function is as follows. Forms part of the ribosomal stalk which helps the ribosome interact with GTP-bound translation factors. Is thus essential for accurate translation. In Cellvibrio japonicus (strain Ueda107) (Pseudomonas fluorescens subsp. cellulosa), this protein is Large ribosomal subunit protein bL12.